Consider the following 825-residue polypeptide: Trimethylamine-N-oxide reductase (825 aa).

The tat-type signal signal peptide spans 1 to 40 (MKKNNVNEQRRDFLKKTSLGVAGSALSGGMVGVVSKSAVA). Mo-bis(molybdopterin guanine dinucleotide) is bound at residue serine 187.

It belongs to the prokaryotic molybdopterin-containing oxidoreductase family. Requires Mo-bis(molybdopterin guanine dinucleotide) as cofactor. In terms of processing, predicted to be exported by the Tat system. The position of the signal peptide cleavage has not been experimentally proven.

The protein localises to the periplasm. The catalysed reaction is trimethylamine + 2 Fe(III)-[cytochrome c] + H2O = trimethylamine N-oxide + 2 Fe(II)-[cytochrome c] + 3 H(+). Functionally, reduces trimethylamine-N-oxide (TMAO) into trimethylamine; an anaerobic reaction coupled to energy-yielding reactions. This is Trimethylamine-N-oxide reductase (torZ) from Haemophilus influenzae (strain ATCC 51907 / DSM 11121 / KW20 / Rd).